Reading from the N-terminus, the 1399-residue chain is FYVE, RhoGEF and PH domain-containing protein 6 (1399 aa).

Disordered stretches follow at residues 1 to 99 (MTSA…KDVR), 138 to 164 (MKEN…SEKC), 185 to 210 (LTQQ…NGDH), 235 to 281 (AHHN…DGIS), 299 to 341 (YTSK…NGSS), and 367 to 479 (PVDE…KKPQ). A compositionally biased stretch (low complexity) spans 50-60 (PAIAPKPKVPT). The span at 259–276 (AESRGHTDSCEPENKRVA) shows a compositional bias: basic and acidic residues. The span at 307–321 (KPRKTHAAARLRRQK) shows a compositional bias: basic residues. 2 stretches are compositionally biased toward polar residues: residues 332–341 (EPGNSNNGSS) and 377–402 (RALT…QQTP). A compositionally biased stretch (low complexity) spans 403-418 (SLDTDSSLTSDSSGSG). Residues 428–453 (TYTQCSTQPLSLPKQVTSACTDQPPA) show a composition bias toward polar residues. A phosphoserine mark is found at Ser-494, Ser-531, and Ser-583. The disordered stretch occupies residues 515–542 (RNYLHHPGPPNHGASASPFDMPNPTSEK). Disordered stretches follow at residues 631 to 650 (QHGD…GLES) and 657 to 678 (TGEE…SLES). A phosphoserine mark is found at Ser-670 and Ser-697. The interval 768-840 (APDGQLQLDP…KQDEDAGMKS (73 aa)) is disordered. Over residues 802–817 (PSDEEVINSSDEDDVS) the composition is skewed to acidic residues. Residues 821-838 (SKGEPDPLEDKQDEDAGM) are compositionally biased toward basic and acidic residues. The DH domain maps to 841–1030 (KVHHIAKEIM…IEVANHANDT (190 aa)). Residues 1059-1153 (VFLKEGTLMK…WLEAISSSIE (95 aa)) enclose the PH 1 domain. Ser-1167 bears the Phosphoserine mark. The segment at 1191–1250 (DTRATMCMICTSEFTLTWRRHHCRACGKIVCQACSSNKYGLDYLKGQLARVCEHCFQELQ) adopts an FYVE-type zinc-finger fold. Zn(2+)-binding residues include Cys-1197, Cys-1200, Cys-1213, Cys-1216, Cys-1221, Cys-1224, Cys-1242, and Cys-1245. In terms of domain architecture, PH 2 spans 1302–1398 (DSTMSGYLYR…WIDAFQEGTV (97 aa)).

Its subcellular location is the cytoplasm. It localises to the cytoskeleton. In terms of biological role, may activate CDC42, a member of the Ras-like family of Rho- and Rac proteins, by exchanging bound GDP for free GTP. May play a role in regulating the actin cytoskeleton and cell shape. This chain is FYVE, RhoGEF and PH domain-containing protein 6 (Fgd6), found in Mus musculus (Mouse).